A 597-amino-acid chain; its full sequence is Arginine--tRNA ligase (597 aa).

The 'HIGH' region signature appears at 138-148 (ANPTGPMHVGH).

Belongs to the class-I aminoacyl-tRNA synthetase family. Monomer.

The protein localises to the cytoplasm. It catalyses the reaction tRNA(Arg) + L-arginine + ATP = L-arginyl-tRNA(Arg) + AMP + diphosphate. The sequence is that of Arginine--tRNA ligase from Nitrobacter winogradskyi (strain ATCC 25391 / DSM 10237 / CIP 104748 / NCIMB 11846 / Nb-255).